Here is a 113-residue protein sequence, read N- to C-terminus: U11-theraphotoxin-Hhn1a (113 aa).

Residues 1 to 21 form the signal peptide; the sequence is MNTVRVTFLPVFVLAVSLGQA. The propeptide occupies 22–74; that stretch reads DKDENRMEMQEKTEQGKSYLDFAENLLLQKLEELEAKLLEEDSEESRNSRQKR. The disordered stretch occupies residues 61-83; sequence EEDSEESRNSRQKRCIGEGVPCD. Intrachain disulfides connect Cys75-Cys90, Cys82-Cys95, and Cys89-Cys110.

It belongs to the neurotoxin 14 (magi-1) family. 01 (HNTX-16) subfamily. In terms of tissue distribution, expressed by the venom gland.

It localises to the secreted. The chain is U11-theraphotoxin-Hhn1a from Cyriopagopus hainanus (Chinese bird spider).